The chain runs to 312 residues: MQTNSSLSEATGSACDPLTRAQILIEALPYIQQYQGRVIVIKYGGAAMVHQERRAEVLRDIVFLACVGIRPVLVHGGGPEINSWLQKLDIPFKFVDGLRVTDAATMEVVEMVLVGKVNKQIVQLISLAGGSAVGLCGRDGNLIKARSQGRAEIGFVGEVSSINPQLLQTLLEGGQIPVISSVAADETGQAYNINADTVAGELAASLGAEKLILLTDTPGILKDPQDRSSLITLLDIETARQLIQAGVVKGGMIPKVQCCIRALAQGVRAAHILDGGSPHSLLLELLTDAGVGTKLVPSQFSAQLEGLNNGSR.

Substrate is bound by residues 77-78 (GG), Arg99, and Asn192.

Belongs to the acetylglutamate kinase family. ArgB subfamily.

The protein resides in the cytoplasm. The catalysed reaction is N-acetyl-L-glutamate + ATP = N-acetyl-L-glutamyl 5-phosphate + ADP. It functions in the pathway amino-acid biosynthesis; L-arginine biosynthesis; N(2)-acetyl-L-ornithine from L-glutamate: step 2/4. In terms of biological role, catalyzes the ATP-dependent phosphorylation of N-acetyl-L-glutamate. In Synechococcus sp. (strain JA-2-3B'a(2-13)) (Cyanobacteria bacterium Yellowstone B-Prime), this protein is Acetylglutamate kinase.